A 251-amino-acid polypeptide reads, in one-letter code: Triosephosphate isomerase (251 aa).

Position 9–11 (9–11 (NWK)) interacts with substrate. The Electrophile role is filled by His95. Residue Glu167 is the Proton acceptor of the active site. Substrate-binding positions include Gly173, Ser213, and 234-235 (GG). The residue at position 213 (Ser213) is a Phosphoserine.

It belongs to the triosephosphate isomerase family. Homodimer.

It is found in the cytoplasm. The catalysed reaction is D-glyceraldehyde 3-phosphate = dihydroxyacetone phosphate. The protein operates within carbohydrate biosynthesis; gluconeogenesis. It functions in the pathway carbohydrate degradation; glycolysis; D-glyceraldehyde 3-phosphate from glycerone phosphate: step 1/1. Functionally, involved in the gluconeogenesis. Catalyzes stereospecifically the conversion of dihydroxyacetone phosphate (DHAP) to D-glyceraldehyde-3-phosphate (G3P). In Bacillus cereus (strain G9842), this protein is Triosephosphate isomerase.